The sequence spans 251 residues: Triosephosphate isomerase (251 aa).

9-11 serves as a coordination point for substrate; that stretch reads NWK. The active-site Electrophile is the His-95. Glu-167 acts as the Proton acceptor in catalysis. Residues Gly-173, Ser-213, and 234-235 contribute to the substrate site; that span reads GG.

The protein belongs to the triosephosphate isomerase family. As to quaternary structure, homodimer.

It localises to the cytoplasm. The enzyme catalyses D-glyceraldehyde 3-phosphate = dihydroxyacetone phosphate. Its pathway is carbohydrate biosynthesis; gluconeogenesis. It functions in the pathway carbohydrate degradation; glycolysis; D-glyceraldehyde 3-phosphate from glycerone phosphate: step 1/1. Involved in the gluconeogenesis. Catalyzes stereospecifically the conversion of dihydroxyacetone phosphate (DHAP) to D-glyceraldehyde-3-phosphate (G3P). The protein is Triosephosphate isomerase of Lactobacillus gasseri (strain ATCC 33323 / DSM 20243 / BCRC 14619 / CIP 102991 / JCM 1131 / KCTC 3163 / NCIMB 11718 / NCTC 13722 / AM63).